Reading from the N-terminus, the 131-residue chain is Small ribosomal subunit protein uS8 (131 aa).

It belongs to the universal ribosomal protein uS8 family. In terms of assembly, part of the 30S ribosomal subunit. Contacts proteins S5 and S12.

Functionally, one of the primary rRNA binding proteins, it binds directly to 16S rRNA central domain where it helps coordinate assembly of the platform of the 30S subunit. The protein is Small ribosomal subunit protein uS8 of Campylobacter jejuni subsp. jejuni serotype O:23/36 (strain 81-176).